The chain runs to 201 residues: IMP cyclohydrolase (201 aa).

This sequence belongs to the archaeal IMP cyclohydrolase family.

The catalysed reaction is IMP + H2O = 5-formamido-1-(5-phospho-D-ribosyl)imidazole-4-carboxamide. It participates in purine metabolism; IMP biosynthesis via de novo pathway; IMP from 5-formamido-1-(5-phospho-D-ribosyl)imidazole-4-carboxamide: step 1/1. Its function is as follows. Catalyzes the cyclization of 5-formylamidoimidazole-4-carboxamide ribonucleotide to IMP. In Methanococcus maripaludis (strain C5 / ATCC BAA-1333), this protein is IMP cyclohydrolase.